Reading from the N-terminus, the 195-residue chain is Probable serine/threonine-protein kinase BUD32 homolog (195 aa).

The 195-residue stretch at 1 to 195 folds into the Protein kinase domain; that stretch reads MKVYLGGEAE…GRYVERVSMG (195 aa). K12 provides a ligand contact to ATP. The Proton acceptor role is filled by D107.

It belongs to the protein kinase superfamily. Tyr protein kinase family. BUD32 subfamily.

The protein resides in the cytoplasm. The enzyme catalyses L-seryl-[protein] + ATP = O-phospho-L-seryl-[protein] + ADP + H(+). The catalysed reaction is L-threonyl-[protein] + ATP = O-phospho-L-threonyl-[protein] + ADP + H(+). In terms of biological role, could be involved in the formation of a threonylcarbamoyl group on adenosine at position 37 (t(6)A37) in tRNAs that read codons beginning with adenine. In Archaeoglobus fulgidus (strain ATCC 49558 / DSM 4304 / JCM 9628 / NBRC 100126 / VC-16), this protein is Probable serine/threonine-protein kinase BUD32 homolog.